A 267-amino-acid polypeptide reads, in one-letter code: Putative glycosyltransferase 63 (267 aa).

Belongs to the glycosyltransferase group 1 family. Glycosyltransferase 4 subfamily.

The sequence is that of Putative glycosyltransferase 63 (SIFV0063) from Sulfolobus islandicus filamentous virus (isolate Iceland/Hveragerdi) (SIFV).